The primary structure comprises 99 residues: MGLFMIIAILLFQKPTVTEQLKKCWNNYVQGHCRKICRVNEVPEALCENGRYCCLNIKELEACKKITKPPRPKPATLALTLQDYVTIIENFPSLKTQST.

A signal peptide spans 1–20; that stretch reads MGLFMIIAILLFQKPTVTEQ. Intrachain disulfides connect cysteine 24/cysteine 53, cysteine 33/cysteine 47, and cysteine 37/cysteine 54. Residues 66–99 constitute a propeptide that is removed on maturation; sequence ITKPPRPKPATLALTLQDYVTIIENFPSLKTQST.

It belongs to the beta-defensin family.

The protein resides in the secreted. Functionally, has antibacterial activity. In Homo sapiens (Human), this protein is Beta-defensin 127 (DEFB127).